Consider the following 568-residue polypeptide: Peptidoglycan D,D-transpeptidase FtsI (568 aa).

A helical membrane pass occupies residues 19–39 (FVTLCSIVFLFLVILTLRIIF). The active-site Acyl-ester intermediate is Ser302.

The protein belongs to the transpeptidase family. FtsI subfamily.

It is found in the cell inner membrane. The enzyme catalyses Preferential cleavage: (Ac)2-L-Lys-D-Ala-|-D-Ala. Also transpeptidation of peptidyl-alanyl moieties that are N-acyl substituents of D-alanine.. Its pathway is cell wall biogenesis; peptidoglycan biosynthesis. In terms of biological role, catalyzes cross-linking of the peptidoglycan cell wall at the division septum. The sequence is that of Peptidoglycan D,D-transpeptidase FtsI from Buchnera aphidicola subsp. Schizaphis graminum (strain Sg).